Reading from the N-terminus, the 159-residue chain is Transcriptional repressor NrdR (159 aa).

A zinc finger lies at 3-34 (CPFCRHEDTQVVDSRVSEDGAAIRRRRRCSAC). Residues 49-139 (PAVVKKDGSR…VYRRFEDVSE (91 aa)) enclose the ATP-cone domain.

This sequence belongs to the NrdR family. Requires Zn(2+) as cofactor.

Functionally, negatively regulates transcription of bacterial ribonucleotide reductase nrd genes and operons by binding to NrdR-boxes. The sequence is that of Transcriptional repressor NrdR from Burkholderia vietnamiensis (strain G4 / LMG 22486) (Burkholderia cepacia (strain R1808)).